Consider the following 187-residue polypeptide: UPF0301 protein YqgE (187 aa).

The protein belongs to the UPF0301 (AlgH) family.

This chain is UPF0301 protein YqgE, found in Salmonella agona (strain SL483).